Reading from the N-terminus, the 425-residue chain is Phosphoribosylamine--glycine ligase (425 aa).

In terms of domain architecture, ATP-grasp spans 110–317 (KEFMKRHGIP…LFDALLASVE (208 aa)). 137 to 198 (ETCPTFPQVI…EAFLSGQEAS (62 aa)) contacts ATP. Glu-287 and Asn-289 together coordinate Mg(2+).

Belongs to the GARS family. The cofactor is Mg(2+). Mn(2+) is required as a cofactor.

The catalysed reaction is 5-phospho-beta-D-ribosylamine + glycine + ATP = N(1)-(5-phospho-beta-D-ribosyl)glycinamide + ADP + phosphate + H(+). The protein operates within purine metabolism; IMP biosynthesis via de novo pathway; N(1)-(5-phospho-D-ribosyl)glycinamide from 5-phospho-alpha-D-ribose 1-diphosphate: step 2/2. This chain is Phosphoribosylamine--glycine ligase, found in Chlorobaculum tepidum (strain ATCC 49652 / DSM 12025 / NBRC 103806 / TLS) (Chlorobium tepidum).